We begin with the raw amino-acid sequence, 315 residues long: Taste receptor type 2 member 129 (315 aa).

At 1-9 the chain is on the extracellular side; the sequence is MDGIIQIIS. A helical transmembrane segment spans residues 10 to 30; sequence AFIVIIEIIIGWFGNGFIVLV. Over 31–46 the chain is Cytoplasmic; sequence NCMHWIKRRRISTVNQ. The chain crosses the membrane as a helical span at residues 47 to 67; it reads ILTALAFSRIYLLLTVFTVIL. Topologically, residues 68–101 are extracellular; it reads ASVQYSNILVTRREVKVIIFHLITSNHFSMWLAA. The chain crosses the membrane as a helical span at residues 102–122; that stretch reads CLGLFYFLKIANFSNFIFVFL. Residues 123–128 lie on the Cytoplasmic side of the membrane; sequence KKRVNK. A helical membrane pass occupies residues 129–149; that stretch reads VVSGTLLMSLVFLFLNTLLIN. The Extracellular segment spans residues 150–185; it reads SYIDAQIDDYRGYLLYDFTSNITVSFYRVILVINNC. Asn-170 carries N-linked (GlcNAc...) asparagine glycosylation. A helical transmembrane segment spans residues 186-206; it reads IFTSIPFALSQSTFLMLIFSL. The Cytoplasmic portion of the chain corresponds to 207-233; the sequence is WRHYKKMQQHAQRCRDTLTNAHIKVLQ. The chain crosses the membrane as a helical span at residues 234 to 254; it reads TMIMYVLLSAIFFLFLSMQIW. At 255 to 266 the chain is on the extracellular side; it reads RNKLMENILFIR. A helical transmembrane segment spans residues 267-287; it reads FCETVAAVFPSGHSCVLIWGD. Over 288-315 the chain is Cytoplasmic; sequence TNLRQTFLSVLWWLKHRFTLWVPKLYCR.

This sequence belongs to the G-protein coupled receptor T2R family.

The protein resides in the membrane. In terms of biological role, putative taste receptor which may play a role in the perception of bitterness. This is Taste receptor type 2 member 129 from Rattus norvegicus (Rat).